A 32-amino-acid polypeptide reads, in one-letter code: Photosystem I reaction center subunit XII (32 aa).

A helical membrane pass occupies residues 10-27; that stretch reads VVALISALVTGILALRLG.

Belongs to the PsaM family.

The protein resides in the plastid. The protein localises to the chloroplast thylakoid membrane. This Zygnema circumcarinatum (Green alga) protein is Photosystem I reaction center subunit XII.